The primary structure comprises 137 residues: Large ribosomal subunit protein eL28 (137 aa).

The residue at position 2 (serine 2) is an N-acetylserine. Residues lysine 58 and lysine 65 each participate in a glycyl lysine isopeptide (Lys-Gly) (interchain with G-Cter in SUMO2) cross-link. Serine 115 is modified (phosphoserine).

Belongs to the eukaryotic ribosomal protein eL28 family. Component of the large ribosomal subunit.

Its subcellular location is the cytoplasm. Functionally, component of the large ribosomal subunit. The ribosome is a large ribonucleoprotein complex responsible for the synthesis of proteins in the cell. In Oryctolagus cuniculus (Rabbit), this protein is Large ribosomal subunit protein eL28 (RPL28).